Here is a 211-residue protein sequence, read N- to C-terminus: Shikimate kinase (211 aa).

A disordered region spans residues 1-22 (MHFRYNYRMQRSKTPNTKNSDT). The segment covering 12 to 22 (SKTPNTKNSDT) has biased composition (polar residues). 36 to 41 (GSGKTT) is an ATP binding site. T40 contacts Mg(2+). Residues D58, R82, and G104 each contribute to the substrate site. R142 contributes to the ATP binding site. R161 is a substrate binding site. Q178 serves as a coordination point for ATP.

Belongs to the shikimate kinase family. Monomer. It depends on Mg(2+) as a cofactor.

Its subcellular location is the cytoplasm. It carries out the reaction shikimate + ATP = 3-phosphoshikimate + ADP + H(+). The protein operates within metabolic intermediate biosynthesis; chorismate biosynthesis; chorismate from D-erythrose 4-phosphate and phosphoenolpyruvate: step 5/7. Catalyzes the specific phosphorylation of the 3-hydroxyl group of shikimic acid using ATP as a cosubstrate. The polypeptide is Shikimate kinase (Nitrosomonas europaea (strain ATCC 19718 / CIP 103999 / KCTC 2705 / NBRC 14298)).